The primary structure comprises 991 residues: uncharacterized protein (991 aa).

Positions 1–17 are cleaved as a signal peptide; it reads MLWPAALVAMFALAARA. Disordered stretches follow at residues 332–352, 392–425, 469–511, 542–569, 587–641, and 658–734; these read DPLP…GETT, TTED…TTEG, EDST…EDTT, DTEA…TTPV, PAPT…NSLS, and ASSG…PPRI. The segment covering 400-413 has biased composition (low complexity); the sequence is TSTPTVTTVIDPTS. Residues 414-425 are compositionally biased toward polar residues; it reads GAVTTESRTTEG. Residues 472-493 are compositionally biased toward low complexity; that stretch reads TTTARAAEYPTPTTTTVEPRPA. Polar residues predominate over residues 542–554; sequence DTEAAQSATSISD. Composition is skewed to low complexity over residues 556-569 and 598-615; these read VTPE…TTPV and ASTT…SHTP. 2 stretches are compositionally biased toward polar residues: residues 617–628 and 658–667; these read PQESTSTPSRAP and ASSGPGASTG. Over residues 668–682 the composition is skewed to low complexity; it reads ATTAPISPPWSASPA. Residues 686–710 show a composition bias toward polar residues; the sequence is VTTSAARTLEPSSTRKAVAAESTTA.

This is an uncharacterized protein from Psittacid herpesvirus 1 (isolate Amazon parrot/-/97-0001/1997) (PsHV-1).